Reading from the N-terminus, the 833-residue chain is MLPFGDKTRDMVNAWFSERVHNIPVCKEGIRAHTESCSCSLPQSPHADNTTPGAPARKISASEFDRPLRPIVVKDSEGTVSFLSDSGKKEQMPLTSPRFDSDEGDQCSRLLELVKDISSHLDVTALCHKIFLHIHGLISADRYSLFLVCEDSSKDKFLVSRLFDVAEGSTLEEASNNCIRLEWNKGIVGHVAAFGEPLNIKDAYEDPRFNAEVDQITGYKTQSILCMPIKNHREEVVGVAQAINKKSGNGGTFTEKDEKDFAAYLAFCGIVLHNAQLYETSLLENKRNQVLLDLASLIFEEQQSLEVILKKIAATIISFMQVQKCTIFIVDEDCPDSFSRVFQMEWEEVGKSSEPLTREHDANKINYMYAQYVKNTMEPLNIPDVTKDNRFPWTNENMGHINTHCIRSLLCTPIKNGKKNKVIGVCQLVNKMEEKTGKIKAFNQNDEQFLEAFVIFCGLGIQNTQMYEAVERAMAKQMVTLEVLSYHASAAEEETRELQALAAAVVPSAQTLKITDFSFSDFELSDLETALCTIRMFTDLNLVQNFQMKHEVLCRWILSVKKNYRKNVAYHNWRHAFNTAQCMFAALKAGKIQNKLTDLETLALLIAALSHDLDHRGVNNSYIQRSEHPLAQLYCHSTMEHHHFDQCLMVLNSPGNQILSGLSIEEYKTTLKIIKQAILATDLALYIKRRGEFFELIRKNEFSFEDPLQKELFLAMLMTACDLSAITKPWPIQQRIAELVAAEFFDQGDRERKELNMEPADLMNREKKNKIPSMQVGFIDAICLQLYEALTHVSEDCLPLLDGCRKNRQKWQALADQQEKTLLNGESGQAKRD.

S60 carries the post-translational modification Phosphoserine. The interval F82–S101 is disordered. 2 GAF domains span residues D122–L272 and S304–I461. The region spanning E494–Q818 is the PDEase domain. H571 serves as the catalytic Proton donor. Zn(2+) contacts are provided by H575, H611, D612, and D722. D612 contributes to the Mg(2+) binding site. Q775 contacts 3',5'-cyclic GMP.

This sequence belongs to the cyclic nucleotide phosphodiesterase family. The cofactor is Zn(2+). It depends on Mg(2+) as a cofactor. Phosphorylation is regulated by binding of cGMP to the two allosteric sites. Phosphorylation by PRKG1 leads to its activation.

It catalyses the reaction 3',5'-cyclic GMP + H2O = GMP + H(+). It functions in the pathway purine metabolism; 3',5'-cyclic GMP degradation; GMP from 3',5'-cyclic GMP: step 1/1. In terms of biological role, plays a role in signal transduction by regulating the intracellular concentration of cyclic nucleotides. This phosphodiesterase catalyzes the specific hydrolysis of cGMP to 5'-GMP. Specifically regulates nitric-oxide-generated cGMP. This is cGMP-specific 3',5'-cyclic phosphodiesterase (Pde5a) from Rattus norvegicus (Rat).